Here is a 127-residue protein sequence, read N- to C-terminus: Large ribosomal subunit protein uL18 (127 aa).

It belongs to the universal ribosomal protein uL18 family. As to quaternary structure, part of the 50S ribosomal subunit; part of the 5S rRNA/L5/L18/L25 subcomplex. Contacts the 5S and 23S rRNAs.

Its function is as follows. This is one of the proteins that bind and probably mediate the attachment of the 5S RNA into the large ribosomal subunit, where it forms part of the central protuberance. The chain is Large ribosomal subunit protein uL18 from Streptomyces griseus subsp. griseus (strain JCM 4626 / CBS 651.72 / NBRC 13350 / KCC S-0626 / ISP 5235).